Consider the following 593-residue polypeptide: ATPase family AAA domain-containing protein 3-B (593 aa).

Disordered regions lie at residues 1-64 (MSWL…LDQS), 109-129 (EEKRKTLNEETKQHQARAQYQ), and 145-164 (QLQNEENLRRQEESVQKQEA). Residues 1–242 (MSWLFGLNRG…FRTFISDWDK (242 aa)) are Mitochondrial intermembrane-facing. Positions 12-27 (PEPPGVPGFPEPPSPP) are enriched in pro residues. Basic and acidic residues-rich tracts occupy residues 33–44 (GGDKNRPKDKWS), 53–64 (RAAKAARELDQS), 109–121 (EEKRKTLNEETKQ), and 150–164 (ENLRRQEESVQKQEA). A coiled-coil region spans residues 51 to 215 (LERAAKAARE…QIRLKAAEHR (165 aa)). Residues 243 to 260 (VTATVAGLTLLAVGVYTA) traverse the membrane as a helical segment. Residues 261 to 593 (KNGTGVAGRY…LQPLLEGTPV (333 aa)) lie on the Mitochondrial matrix side of the membrane. 348–355 (GPPGTGKT) is an ATP binding site. The segment covering 570–580 (AEGKESTKEIG) has biased composition (basic and acidic residues). The tract at residues 570–593 (AEGKESTKEIGKNPLQPLLEGTPV) is disordered.

Belongs to the AAA ATPase family. As to quaternary structure, can form homooligomers. Homodimer formation at the N-terminus may be regulated by ATP and is required for the interaction with the inner surface of the mitochondrial outer membrane and correct mitochondrial homeostasis.

The protein resides in the mitochondrion inner membrane. Its subcellular location is the mitochondrion matrix. It localises to the mitochondrion nucleoid. It carries out the reaction ATP + H2O = ADP + phosphate + H(+). Essential for mitochondrial network organization, mitochondrial metabolism and cell growth at organism and cellular level. May play an important role in mitochondrial protein synthesis. May also participate in mitochondrial DNA replication. May bind to mitochondrial DNA D-loops and contribute to nucleoid stability. Required for enhanced channeling of cholesterol for hormone-dependent steroidogenesis. Involved in mitochondrial-mediated antiviral innate immunity. Required to protect mitochondria from the PERK-mediated unfolded protein response: specifically inhibits the activity of EIF2AK3/PERK at mitochondria-endoplasmic reticulum contact sites, thereby providing a safe haven for mitochondrial protein translation during endoplasmic reticulum stress. Ability to inhibit EIF2AK3/PERK is independent of its ATPase activity. Also involved in the mitochondrial DNA damage response by promoting signaling between damaged genomes and the mitochondrial membrane, leading to activation of the integrated stress response (ISR). This chain is ATPase family AAA domain-containing protein 3-B (atad3-b), found in Xenopus laevis (African clawed frog).